The chain runs to 356 residues: Tyrosine recombinase XerS (356 aa).

The Core-binding (CB) domain maps to 16–121 (LMPWYVLEYY…ALSSLYKYLT (106 aa)). A Tyr recombinase domain is found at 169–354 (EFLEYVDCEY…VNDEQKNALD (186 aa)). Active-site residues include Arg210, Lys234, His306, Arg309, and His332. Tyr341 (O-(3'-phospho-DNA)-tyrosine intermediate) is an active-site residue.

Belongs to the 'phage' integrase family. XerS subfamily.

It localises to the cytoplasm. Its activity is regulated as follows. FtsK is required for recombination. Its function is as follows. Site-specific tyrosine recombinase, which acts by catalyzing the cutting and rejoining of the recombining DNA molecules. Essential to convert dimers of the bacterial chromosome into monomers to permit their segregation at cell division. The chain is Tyrosine recombinase XerS from Streptococcus mutans serotype c (strain ATCC 700610 / UA159).